A 312-amino-acid chain; its full sequence is Homeobox-leucine zipper protein ATHB-5 (312 aa).

A disordered region spans residues 1 to 33; it reads MKRSRGSSDSLSGFLPIRHSTTDKQISPRPTTT. Polar residues predominate over residues 23 to 33; it reads DKQISPRPTTT. The segment at residues 69–128 is a DNA-binding region (homeobox); it reads AAEKKRRLGVEQVKALEKNFEIDNKLEPERKVKLAQELGLQPRQVAIWFQNRRARWKTKQ. Positions 129–164 are leucine-zipper; that stretch reads LERDYGVLKSNFDALKRNRDSLQRDNDSLLGQIKEL.

The protein belongs to the HD-ZIP homeobox family. Class I subfamily. Interacts with DNA as homodimer. In terms of tissue distribution, widely expressed.

It localises to the nucleus. In terms of biological role, probable transcription factor that acts as a positive regulator of ABA-responsiveness, mediating the inhibitory effect of ABA on growth during seedling establishment. Binds to the DNA sequence 5'-CAATNATTG-3'. This chain is Homeobox-leucine zipper protein ATHB-5 (ATHB-5), found in Arabidopsis thaliana (Mouse-ear cress).